The primary structure comprises 229 residues: Ribosome maturation factor RimM (229 aa).

Positions 1–21 are disordered; it reads MAGHDSGNAKRGRSPSFGVFV. The 82-residue stretch at 148 to 229 folds into the PRC barrel domain; that stretch reads ADEFYWVDLI…RVVVDWEADY (82 aa).

The protein belongs to the RimM family. Binds ribosomal protein uS19.

The protein localises to the cytoplasm. Its function is as follows. An accessory protein needed during the final step in the assembly of 30S ribosomal subunit, possibly for assembly of the head region. Essential for efficient processing of 16S rRNA. May be needed both before and after RbfA during the maturation of 16S rRNA. It has affinity for free ribosomal 30S subunits but not for 70S ribosomes. This Burkholderia pseudomallei (strain 1106a) protein is Ribosome maturation factor RimM.